The chain runs to 217 residues: Thymidylate kinase (217 aa).

ATP is bound at residue 7-14; it reads GIDGAGKS.

It belongs to the thymidylate kinase family.

The catalysed reaction is dTMP + ATP = dTDP + ADP. Phosphorylation of dTMP to form dTDP in both de novo and salvage pathways of dTTP synthesis. This chain is Thymidylate kinase, found in Chlorobaculum parvum (strain DSM 263 / NCIMB 8327) (Chlorobium vibrioforme subsp. thiosulfatophilum).